The primary structure comprises 320 residues: tRNA N6-adenosine threonylcarbamoyltransferase (320 aa).

Residues His-114 and His-118 each coordinate Fe cation. Substrate-binding positions include 136–140, Asp-169, Gly-182, Asp-186, and Asn-273; that span reads VVSGG. Fe cation is bound at residue Asp-297.

Belongs to the KAE1 / TsaD family. The cofactor is Fe(2+).

The protein localises to the cytoplasm. The catalysed reaction is L-threonylcarbamoyladenylate + adenosine(37) in tRNA = N(6)-L-threonylcarbamoyladenosine(37) in tRNA + AMP + H(+). Its function is as follows. Required for the formation of a threonylcarbamoyl group on adenosine at position 37 (t(6)A37) in tRNAs that read codons beginning with adenine. Is involved in the transfer of the threonylcarbamoyl moiety of threonylcarbamoyl-AMP (TC-AMP) to the N6 group of A37, together with TsaE and TsaB. TsaD likely plays a direct catalytic role in this reaction. In Ureaplasma parvum serovar 3 (strain ATCC 27815 / 27 / NCTC 11736), this protein is tRNA N6-adenosine threonylcarbamoyltransferase.